The chain runs to 317 residues: 2,3-dihydroxyphenylpropionate/2,3-dihydroxicinnamic acid 1,2-dioxygenase (317 aa).

The active-site Proton donor is the histidine 115. The active-site Proton acceptor is the histidine 179.

Belongs to the LigB/MhpB extradiol dioxygenase family. As to quaternary structure, homotetramer. Fe(2+) serves as cofactor.

It carries out the reaction 3-(2,3-dihydroxyphenyl)propanoate + O2 = (2Z,4E)-2-hydroxy-6-oxonona-2,4-dienedioate + H(+). The catalysed reaction is (2E)-3-(2,3-dihydroxyphenyl)prop-2-enoate + O2 = (2Z,4E,7E)-2-hydroxy-6-oxonona-2,4,7-trienedioate + H(+). It functions in the pathway aromatic compound metabolism; 3-phenylpropanoate degradation. Functionally, catalyzes the non-heme iron(II)-dependent oxidative cleavage of 2,3-dihydroxyphenylpropionic acid and 2,3-dihydroxicinnamic acid into 2-hydroxy-6-ketononadienedioate and 2-hydroxy-6-ketononatrienedioate, respectively. The polypeptide is 2,3-dihydroxyphenylpropionate/2,3-dihydroxicinnamic acid 1,2-dioxygenase (Burkholderia vietnamiensis (strain G4 / LMG 22486) (Burkholderia cepacia (strain R1808))).